We begin with the raw amino-acid sequence, 145 residues long: Large ribosomal subunit protein uL13 (145 aa).

It belongs to the universal ribosomal protein uL13 family. As to quaternary structure, part of the 50S ribosomal subunit.

This protein is one of the early assembly proteins of the 50S ribosomal subunit, although it is not seen to bind rRNA by itself. It is important during the early stages of 50S assembly. This is Large ribosomal subunit protein uL13 from Bacillus pumilus (strain SAFR-032).